Reading from the N-terminus, the 324-residue chain is Thiamine thiazole synthase (324 aa).

Substrate-binding positions include C86, 107 to 108 (EA), G115, and V180. C213 carries the 2,3-didehydroalanine (Cys) modification. Substrate-binding positions include D215, H230, M282, and 292–294 (RMG).

It belongs to the THI4 family. As to quaternary structure, homooctamer. It depends on Fe cation as a cofactor. During the catalytic reaction, a sulfide is transferred from Cys-213 to a reaction intermediate, generating a dehydroalanine residue.

The protein resides in the cytoplasm. It is found in the nucleus. The enzyme catalyses [ADP-thiazole synthase]-L-cysteine + glycine + NAD(+) = [ADP-thiazole synthase]-dehydroalanine + ADP-5-ethyl-4-methylthiazole-2-carboxylate + nicotinamide + 3 H2O + 2 H(+). Functionally, involved in biosynthesis of the thiamine precursor thiazole. Catalyzes the conversion of NAD and glycine to adenosine diphosphate 5-(2-hydroxyethyl)-4-methylthiazole-2-carboxylic acid (ADT), an adenylated thiazole intermediate. The reaction includes an iron-dependent sulfide transfer from a conserved cysteine residue of the protein to a thiazole intermediate. The enzyme can only undergo a single turnover, which suggests it is a suicide enzyme. May have additional roles in adaptation to various stress conditions and in DNA damage tolerance. The sequence is that of Thiamine thiazole synthase (sti35) from Fusarium solani subsp. phaseoli (Nectria haematococca).